Consider the following 79-residue polypeptide: MSSIEDRVKKIVVEQLGVKEEEVTGEASFVDDLGADSLDTVELVMALEEEFECEIPDEEAEKITTVQQAVDYIKKHLEG.

The region spanning 2 to 77 is the Carrier domain; that stretch reads SSIEDRVKKI…QAVDYIKKHL (76 aa). Position 37 is an O-(pantetheine 4'-phosphoryl)serine (serine 37).

This sequence belongs to the acyl carrier protein (ACP) family. 4'-phosphopantetheine is transferred from CoA to a specific serine of apo-ACP by AcpS. This modification is essential for activity because fatty acids are bound in thioester linkage to the sulfhydryl of the prosthetic group.

The protein localises to the cytoplasm. Its pathway is lipid metabolism; fatty acid biosynthesis. Carrier of the growing fatty acid chain in fatty acid biosynthesis. This chain is Acyl carrier protein, found in Halorhodospira halophila (strain DSM 244 / SL1) (Ectothiorhodospira halophila (strain DSM 244 / SL1)).